Reading from the N-terminus, the 201-residue chain is Probable chemoreceptor glutamine deamidase CheD 1 (201 aa).

It belongs to the CheD family.

It carries out the reaction L-glutaminyl-[protein] + H2O = L-glutamyl-[protein] + NH4(+). Probably deamidates glutamine residues to glutamate on methyl-accepting chemotaxis receptors (MCPs), playing an important role in chemotaxis. This chain is Probable chemoreceptor glutamine deamidase CheD 1, found in Dechloromonas aromatica (strain RCB).